We begin with the raw amino-acid sequence, 435 residues long: Phosphomethylpyrimidine synthase (435 aa).

Residues N67, M96, Y125, H163, 185-187, 226-229, and E265 contribute to the substrate site; these read SRG and DGLR. H269 is a Zn(2+) binding site. A substrate-binding site is contributed by Y292. H333 contacts Zn(2+). The [4Fe-4S] cluster site is built by C408, C411, and C415.

This sequence belongs to the ThiC family. The cofactor is [4Fe-4S] cluster.

It catalyses the reaction 5-amino-1-(5-phospho-beta-D-ribosyl)imidazole + S-adenosyl-L-methionine = 4-amino-2-methyl-5-(phosphooxymethyl)pyrimidine + CO + 5'-deoxyadenosine + formate + L-methionine + 3 H(+). It participates in cofactor biosynthesis; thiamine diphosphate biosynthesis. In terms of biological role, catalyzes the synthesis of the hydroxymethylpyrimidine phosphate (HMP-P) moiety of thiamine from aminoimidazole ribotide (AIR) in a radical S-adenosyl-L-methionine (SAM)-dependent reaction. This Thermus thermophilus (strain ATCC 27634 / DSM 579 / HB8) protein is Phosphomethylpyrimidine synthase.